Consider the following 484-residue polypeptide: Protein nucleotidyltransferase YdiU (484 aa).

ATP-binding residues include G81, G83, R84, K103, D115, G116, R166, and R173. D244 acts as the Proton acceptor in catalysis. Residues N245 and D254 each coordinate Mg(2+). D254 provides a ligand contact to ATP.

It belongs to the SELO family. It depends on Mg(2+) as a cofactor. The cofactor is Mn(2+).

It carries out the reaction L-seryl-[protein] + ATP = 3-O-(5'-adenylyl)-L-seryl-[protein] + diphosphate. It catalyses the reaction L-threonyl-[protein] + ATP = 3-O-(5'-adenylyl)-L-threonyl-[protein] + diphosphate. The catalysed reaction is L-tyrosyl-[protein] + ATP = O-(5'-adenylyl)-L-tyrosyl-[protein] + diphosphate. The enzyme catalyses L-histidyl-[protein] + UTP = N(tele)-(5'-uridylyl)-L-histidyl-[protein] + diphosphate. It carries out the reaction L-seryl-[protein] + UTP = O-(5'-uridylyl)-L-seryl-[protein] + diphosphate. It catalyses the reaction L-tyrosyl-[protein] + UTP = O-(5'-uridylyl)-L-tyrosyl-[protein] + diphosphate. Its function is as follows. Nucleotidyltransferase involved in the post-translational modification of proteins. It can catalyze the addition of adenosine monophosphate (AMP) or uridine monophosphate (UMP) to a protein, resulting in modifications known as AMPylation and UMPylation. This is Protein nucleotidyltransferase YdiU from Shewanella putrefaciens (strain CN-32 / ATCC BAA-453).